The sequence spans 225 residues: UPF0758 protein Shew185_0376 (225 aa).

An MPN domain is found at 102-224; sequence VLTNPDLTRD…IVSFAERGWI (123 aa). Zn(2+) contacts are provided by His-173, His-175, and Asp-186. The JAMM motif signature appears at 173–186; the sequence is HNHPSGNAEPSQAD.

It belongs to the UPF0758 family.

The sequence is that of UPF0758 protein Shew185_0376 from Shewanella baltica (strain OS185).